Consider the following 476-residue polypeptide: Cytosolic Fe-S cluster assembly factor narfl (476 aa).

The [4Fe-4S] cluster site is built by Cys-24, Cys-71, Cys-74, Cys-77, Cys-190, Cys-246, Cys-395, and Cys-399.

The protein belongs to the NARF family. As to quaternary structure, component of the CIA complex.

Its function is as follows. Component of the cytosolic iron-sulfur protein assembly (CIA) complex, a multiprotein complex that mediates the incorporation of iron-sulfur cluster into extramitochondrial Fe/S proteins. The protein is Cytosolic Fe-S cluster assembly factor narfl (narfl) of Xenopus tropicalis (Western clawed frog).